The sequence spans 194 residues: Ribonuclease HII (194 aa).

The 191-residue stretch at 3–193 (ILTAGVDEAG…VRNLLAQQAL (191 aa)) folds into the RNase H type-2 domain. 3 residues coordinate a divalent metal cation: aspartate 9, glutamate 10, and aspartate 101.

It belongs to the RNase HII family. Mn(2+) is required as a cofactor. Mg(2+) serves as cofactor.

It is found in the cytoplasm. The catalysed reaction is Endonucleolytic cleavage to 5'-phosphomonoester.. In terms of biological role, endonuclease that specifically degrades the RNA of RNA-DNA hybrids. This is Ribonuclease HII (rnhB) from Neisseria meningitidis serogroup A / serotype 4A (strain DSM 15465 / Z2491).